Reading from the N-terminus, the 597-residue chain is Translation initiation factor IF-2 (597 aa).

Low complexity-rich tracts occupy residues 57-73 (GGDA…AATA) and 81-95 (TPAA…PASD). The tract at residues 57–96 (GGDAAPAAASAPAAATAEPEEADETPAAAAQADAEPASDL) is disordered. A tr-type G domain is found at 98-271 (HRAPVVTIMG…ELEDLRADPK (174 aa)). Residues 107-114 (GHVDHGKT) form a G1 region. 107 to 114 (GHVDHGKT) lines the GTP pocket. The segment at 132–136 (GITQH) is G2. The interval 153 to 156 (DTPG) is G3. Residues 153–157 (DTPGH) and 207–210 (NKVD) each bind GTP. The tract at residues 207–210 (NKVD) is G4. The interval 243-245 (SAK) is G5.

It belongs to the TRAFAC class translation factor GTPase superfamily. Classic translation factor GTPase family. IF-2 subfamily.

The protein resides in the cytoplasm. Functionally, one of the essential components for the initiation of protein synthesis. Protects formylmethionyl-tRNA from spontaneous hydrolysis and promotes its binding to the 30S ribosomal subunits. Also involved in the hydrolysis of GTP during the formation of the 70S ribosomal complex. The chain is Translation initiation factor IF-2 from Deinococcus radiodurans (strain ATCC 13939 / DSM 20539 / JCM 16871 / CCUG 27074 / LMG 4051 / NBRC 15346 / NCIMB 9279 / VKM B-1422 / R1).